The chain runs to 149 residues: Large ribosomal subunit protein bL9 (149 aa).

The protein belongs to the bacterial ribosomal protein bL9 family.

In terms of biological role, binds to the 23S rRNA. This Stenotrophomonas maltophilia (strain K279a) protein is Large ribosomal subunit protein bL9.